Here is a 545-residue protein sequence, read N- to C-terminus: CTP synthase (545 aa).

Residues 1-266 (MTTNYIFVTG…DDLVCARFGI (266 aa)) are amidoligase domain. Residue S14 coordinates CTP. S14 provides a ligand contact to UTP. Residues 15–20 (SLGKGI) and D72 each bind ATP. Positions 72 and 140 each coordinate Mg(2+). CTP contacts are provided by residues 147–149 (DIE), 187–192 (KTKPTQ), and K223. UTP contacts are provided by residues 187-192 (KTKPTQ) and K223. 239–241 (KDV) is a binding site for ATP. In terms of domain architecture, Glutamine amidotransferase type-1 spans 291 to 542 (TIGMVGKYIE…IKAAGENARG (252 aa)). G352 lines the L-glutamine pocket. The active-site Nucleophile; for glutamine hydrolysis is the C379. L-glutamine contacts are provided by residues 380–383 (LGMQ), E403, and R470. Catalysis depends on residues H515 and E517.

Belongs to the CTP synthase family. As to quaternary structure, homotetramer.

The enzyme catalyses UTP + L-glutamine + ATP + H2O = CTP + L-glutamate + ADP + phosphate + 2 H(+). It catalyses the reaction L-glutamine + H2O = L-glutamate + NH4(+). The catalysed reaction is UTP + NH4(+) + ATP = CTP + ADP + phosphate + 2 H(+). The protein operates within pyrimidine metabolism; CTP biosynthesis via de novo pathway; CTP from UDP: step 2/2. With respect to regulation, allosterically activated by GTP, when glutamine is the substrate; GTP has no effect on the reaction when ammonia is the substrate. The allosteric effector GTP functions by stabilizing the protein conformation that binds the tetrahedral intermediate(s) formed during glutamine hydrolysis. Inhibited by the product CTP, via allosteric rather than competitive inhibition. Its function is as follows. Catalyzes the ATP-dependent amination of UTP to CTP with either L-glutamine or ammonia as the source of nitrogen. Regulates intracellular CTP levels through interactions with the four ribonucleotide triphosphates. The sequence is that of CTP synthase from Vibrio vulnificus (strain CMCP6).